A 102-amino-acid polypeptide reads, in one-letter code: Small ribosomal subunit protein uS10 (102 aa).

This sequence belongs to the universal ribosomal protein uS10 family. As to quaternary structure, part of the 30S ribosomal subunit.

Its function is as follows. Involved in the binding of tRNA to the ribosomes. This is Small ribosomal subunit protein uS10 from Kineococcus radiotolerans (strain ATCC BAA-149 / DSM 14245 / SRS30216).